We begin with the raw amino-acid sequence, 248 residues long: uncharacterized protein (248 aa).

8–32 (EVALVTGASSGIGKAIALELASAGL) contacts NADP(+). Ser-134 is a substrate binding site. Tyr-147 acts as the Proton acceptor in catalysis.

It belongs to the short-chain dehydrogenases/reductases (SDR) family.

This is an uncharacterized protein from Sinorhizobium fredii (strain NBRC 101917 / NGR234).